Reading from the N-terminus, the 94-residue chain is DASH complex subunit DAD5 (94 aa).

Over residues 1 to 20 the composition is skewed to low complexity; sequence MRRSTIVPTSRTSSSSPSPS. Residues 1–25 are disordered; that stretch reads MRRSTIVPTSRTSSSSPSPSQMKSF.

It belongs to the DASH complex HSK3 family. As to quaternary structure, component of the DASH complex consisting of ask1, dad1, dad2, dad3, dad4, dam1, duo1, dad5, spc19 and spc34, with a stoichiometry of one copy of each subunit per complex. Multiple DASH complexes oligomerize to form a ring that encircles spindle microtubules and organizes the rod-like NDC80 complexes of the outer kinetochore. DASH complex oligomerization strengthens microtubule attachments. On cytoplasmic microtubules, DASH complexes appear to form patches instead of rings.

It is found in the nucleus. It localises to the cytoplasm. The protein localises to the cytoskeleton. Its subcellular location is the spindle. The protein resides in the chromosome. It is found in the centromere. It localises to the kinetochore. Its function is as follows. Component of the DASH complex that connects microtubules with kinetochores and couples microtubule depolymerisation to chromosome movement; it is involved in retrieving kinetochores to the spindle poles before their re-orientation on the spindle in early mitosis and allows microtubule depolymerization to pull chromosomes apart and resist detachment during anaphase. Kinetochores, consisting of a centromere-associated inner segment and a microtubule-contacting outer segment, play a crucial role in chromosome segregation by mediating the physical connection between centromeric DNA and microtubules. Kinetochores also serve as an input point for the spindle assembly checkpoint, which delays anaphase until all chromosomes have bioriented on the mitotic spindle. The DASH complex mediates bipolar kinetochore-microtubule attachments and facilitates the formation of additional interactions between outer kinetochore components and spindle microtubules. During chromosome movement along the microtubule, it is required both for the sliding of kinetochores along the lateral side of the microtubule and also for microtubule end-on pulling on the kinetochore. Modulates cytoplasmic microtubule dynamics by tracking the plus-end of shortening microtubules and slowing their depolymerization. This is DASH complex subunit DAD5 from Schizosaccharomyces pombe (strain 972 / ATCC 24843) (Fission yeast).